A 402-amino-acid polypeptide reads, in one-letter code: MAT+ sexual cell fertilization-promoting factor (402 aa).

The segment at residues 169 to 237 is a DNA-binding region (HMG box); it reads IPRPPNAYIL…KLMSAHPHYR (69 aa). The disordered stretch occupies residues 246–272; the sequence is IRRRAPRRNRAQEVANASPIGENSGAP.

The protein resides in the nucleus. In terms of biological role, controls fertilization, probably by determining the mating type. The chain is MAT+ sexual cell fertilization-promoting factor (FPR1) from Podospora anserina (Pleurage anserina).